A 154-amino-acid chain; its full sequence is Ribonuclease H (154 aa).

An RNase H type-1 domain is found at 5–146 (EQNIVYLYCD…ADELANRGID (142 aa)). Residues Asp14, Glu52, Asp74, and Asp138 each coordinate Mg(2+).

This sequence belongs to the RNase H family. In terms of assembly, monomer. It depends on Mg(2+) as a cofactor.

It localises to the cytoplasm. It carries out the reaction Endonucleolytic cleavage to 5'-phosphomonoester.. Endonuclease that specifically degrades the RNA of RNA-DNA hybrids. The protein is Ribonuclease H of Coxiella burnetii (strain RSA 331 / Henzerling II).